The primary structure comprises 202 residues: Dephospho-CoA kinase (202 aa).

One can recognise a DPCK domain in the interval 5-202 (IVGLTGGIAS…DADYRARANP (198 aa)). Position 13–18 (13–18 (ASGKSA)) interacts with ATP.

Belongs to the CoaE family.

The protein localises to the cytoplasm. It catalyses the reaction 3'-dephospho-CoA + ATP = ADP + CoA + H(+). Its pathway is cofactor biosynthesis; coenzyme A biosynthesis; CoA from (R)-pantothenate: step 5/5. Catalyzes the phosphorylation of the 3'-hydroxyl group of dephosphocoenzyme A to form coenzyme A. This Xanthomonas axonopodis pv. citri (strain 306) protein is Dephospho-CoA kinase.